A 293-amino-acid polypeptide reads, in one-letter code: 4-hydroxy-3-methylbut-2-enyl diphosphate reductase (293 aa).

Cysteine 12 is a binding site for [4Fe-4S] cluster. (2E)-4-hydroxy-3-methylbut-2-enyl diphosphate contacts are provided by histidine 40 and histidine 74. Dimethylallyl diphosphate-binding residues include histidine 40 and histidine 74. Isopentenyl diphosphate-binding residues include histidine 40 and histidine 74. Residue cysteine 96 coordinates [4Fe-4S] cluster. Histidine 128 contacts (2E)-4-hydroxy-3-methylbut-2-enyl diphosphate. Histidine 128 contacts dimethylallyl diphosphate. Histidine 128 contributes to the isopentenyl diphosphate binding site. Residue glutamate 130 is the Proton donor of the active site. Threonine 166 contacts (2E)-4-hydroxy-3-methylbut-2-enyl diphosphate. Cysteine 202 is a binding site for [4Fe-4S] cluster. Residues serine 230, serine 231, asparagine 232, and serine 274 each coordinate (2E)-4-hydroxy-3-methylbut-2-enyl diphosphate. Positions 230, 231, 232, and 274 each coordinate dimethylallyl diphosphate. Residues serine 230, serine 231, asparagine 232, and serine 274 each coordinate isopentenyl diphosphate.

The protein belongs to the IspH family. The cofactor is [4Fe-4S] cluster.

It catalyses the reaction isopentenyl diphosphate + 2 oxidized [2Fe-2S]-[ferredoxin] + H2O = (2E)-4-hydroxy-3-methylbut-2-enyl diphosphate + 2 reduced [2Fe-2S]-[ferredoxin] + 2 H(+). The enzyme catalyses dimethylallyl diphosphate + 2 oxidized [2Fe-2S]-[ferredoxin] + H2O = (2E)-4-hydroxy-3-methylbut-2-enyl diphosphate + 2 reduced [2Fe-2S]-[ferredoxin] + 2 H(+). The protein operates within isoprenoid biosynthesis; dimethylallyl diphosphate biosynthesis; dimethylallyl diphosphate from (2E)-4-hydroxy-3-methylbutenyl diphosphate: step 1/1. It participates in isoprenoid biosynthesis; isopentenyl diphosphate biosynthesis via DXP pathway; isopentenyl diphosphate from 1-deoxy-D-xylulose 5-phosphate: step 6/6. In terms of biological role, catalyzes the conversion of 1-hydroxy-2-methyl-2-(E)-butenyl 4-diphosphate (HMBPP) into a mixture of isopentenyl diphosphate (IPP) and dimethylallyl diphosphate (DMAPP). Acts in the terminal step of the DOXP/MEP pathway for isoprenoid precursor biosynthesis. This is 4-hydroxy-3-methylbut-2-enyl diphosphate reductase from Cytophaga hutchinsonii (strain ATCC 33406 / DSM 1761 / CIP 103989 / NBRC 15051 / NCIMB 9469 / D465).